Reading from the N-terminus, the 357-residue chain is MSRPTRLVIEPSALLHNLSQIKHLAPGKKVIAMVKANAYGCGVREVAPVLDGRIEAFGVACLEEALAIRALGVETPCILFQGVFSSDELSVAVENDFACVLHHAQQLEWLIKTPLPYPIKVWVKVNTGMHRLGFKIHELQKVMGALQTCTWVDKSIGLMTHLACADEPHRPENQQQISLFQEISIPGFRQRSIANSAAIISFPDSQADVVRPGIMLYGVSPFANQNAHDLGLIPVMRFMSAISAIHDNPSFAQVGYGGTWKSDKPSRIGVVAAGYGDGYPRHISEKTPVWVRGREVSIVGRVSMDMLTIDLTEHPDVEIGDEVELWGTHVLVERIAKSAGTVGYELLCQISERVRYK.

The active-site Proton acceptor; specific for D-alanine is lysine 35. N6-(pyridoxal phosphate)lysine is present on lysine 35. Residue arginine 131 coordinates substrate. Residue tyrosine 256 is the Proton acceptor; specific for L-alanine of the active site. Residue methionine 304 coordinates substrate.

It belongs to the alanine racemase family. Pyridoxal 5'-phosphate is required as a cofactor.

The enzyme catalyses L-alanine = D-alanine. It functions in the pathway amino-acid biosynthesis; D-alanine biosynthesis; D-alanine from L-alanine: step 1/1. Functionally, catalyzes the interconversion of L-alanine and D-alanine. May also act on other amino acids. The chain is Alanine racemase (alr) from Legionella pneumophila (strain Corby).